We begin with the raw amino-acid sequence, 366 residues long: Aminomethyltransferase (366 aa).

It belongs to the GcvT family. As to quaternary structure, the glycine cleavage system is composed of four proteins: P, T, L and H.

The enzyme catalyses N(6)-[(R)-S(8)-aminomethyldihydrolipoyl]-L-lysyl-[protein] + (6S)-5,6,7,8-tetrahydrofolate = N(6)-[(R)-dihydrolipoyl]-L-lysyl-[protein] + (6R)-5,10-methylene-5,6,7,8-tetrahydrofolate + NH4(+). Its function is as follows. The glycine cleavage system catalyzes the degradation of glycine. This is Aminomethyltransferase from Bacillus velezensis (strain DSM 23117 / BGSC 10A6 / LMG 26770 / FZB42) (Bacillus amyloliquefaciens subsp. plantarum).